The following is a 235-amino-acid chain: tRNA pseudouridine synthase B (235 aa).

Asp45 serves as the catalytic Nucleophile.

This sequence belongs to the pseudouridine synthase TruB family. Type 1 subfamily.

The enzyme catalyses uridine(55) in tRNA = pseudouridine(55) in tRNA. In terms of biological role, responsible for synthesis of pseudouridine from uracil-55 in the psi GC loop of transfer RNAs. This chain is tRNA pseudouridine synthase B, found in Chlamydia abortus (strain DSM 27085 / S26/3) (Chlamydophila abortus).